The following is a 346-amino-acid chain: Probable electron transfer flavoprotein subunit alpha, mitochondrial (346 aa).

285 to 313 provides a ligand contact to FAD; the sequence is LYVAIGISGAIQHLAGMKESKMIIAINKD.

This sequence belongs to the ETF alpha-subunit/FixB family. Heterodimer of an alpha and a beta subunit. It depends on FAD as a cofactor.

The protein resides in the mitochondrion matrix. Functionally, the electron transfer flavoprotein serves as a specific electron acceptor for several dehydrogenases, including five acyl-CoA dehydrogenases, glutaryl-CoA and sarcosine dehydrogenase. It transfers the electrons to the main mitochondrial respiratory chain via ETF-ubiquinone oxidoreductase (ETF dehydrogenase). The polypeptide is Probable electron transfer flavoprotein subunit alpha, mitochondrial (ETF1) (Cryptococcus gattii serotype B (strain WM276 / ATCC MYA-4071) (Filobasidiella gattii)).